The following is a 391-amino-acid chain: FLUCTUATING-LIGHT-ACCLIMATION protein 1, chloroplastic (391 aa).

Residues 1-48 constitute a chloroplast transit peptide; it reads MASSSTFLELTPFQWNQPLPYTQRPHHRTVLLYSKPQRRSNSIRLQIS. Residues 87–107 traverse the membrane as a helical segment; sequence AIAAVLLGLLLFYDPNSALAA. Residues 116-138 show a composition bias toward low complexity; that stretch reads SFSSRSRSSSSSSSQSYSVPRTS. The interval 116 to 140 is disordered; sequence SFSSRSRSSSSSSSQSYSVPRTSNP. Transmembrane regions (helical) follow at residues 168–188 and 321–341; these read FGFGGFSSFSLILVGFAAFVL and YIVVTILMAAEGIHKLPPING.

Belongs to the FLAP family.

Its subcellular location is the plastid. It localises to the chloroplast thylakoid membrane. The protein localises to the chloroplast membrane. It is found in the chloroplast envelope. Its function is as follows. Monitors proton H(+) homeostasis in chloroplasts to manipulate luminal acidification levels appropriately to balance photoprotection and photochemical processes. Required during acclimation response to fluctuating light (e.g. photosynthetic activity optimization) by controlling non-photochemical quenching (NPQ); acts independently from DLDG1. This Arabidopsis thaliana (Mouse-ear cress) protein is FLUCTUATING-LIGHT-ACCLIMATION protein 1, chloroplastic.